Consider the following 102-residue polypeptide: Large ribosomal subunit protein bL21 (102 aa).

This sequence belongs to the bacterial ribosomal protein bL21 family. Part of the 50S ribosomal subunit. Contacts protein L20.

Its function is as follows. This protein binds to 23S rRNA in the presence of protein L20. This chain is Large ribosomal subunit protein bL21, found in Bacillus licheniformis (strain ATCC 14580 / DSM 13 / JCM 2505 / CCUG 7422 / NBRC 12200 / NCIMB 9375 / NCTC 10341 / NRRL NRS-1264 / Gibson 46).